Here is a 306-residue protein sequence, read N- to C-terminus: Pantothenate kinase (306 aa).

An ATP-binding site is contributed by Gly91–Ser98.

The protein belongs to the prokaryotic pantothenate kinase family.

Its subcellular location is the cytoplasm. The catalysed reaction is (R)-pantothenate + ATP = (R)-4'-phosphopantothenate + ADP + H(+). It participates in cofactor biosynthesis; coenzyme A biosynthesis; CoA from (R)-pantothenate: step 1/5. The protein is Pantothenate kinase of Streptococcus suis (strain 98HAH33).